Consider the following 477-residue polypeptide: Glycogen synthase (477 aa).

Residue Lys15 coordinates ADP-alpha-D-glucose.

The protein belongs to the glycosyltransferase 1 family. Bacterial/plant glycogen synthase subfamily.

It catalyses the reaction [(1-&gt;4)-alpha-D-glucosyl](n) + ADP-alpha-D-glucose = [(1-&gt;4)-alpha-D-glucosyl](n+1) + ADP + H(+). The protein operates within glycan biosynthesis; glycogen biosynthesis. Its function is as follows. Synthesizes alpha-1,4-glucan chains using ADP-glucose. This is Glycogen synthase from Shigella flexneri.